The following is a 359-amino-acid chain: Bergaptol O-methyltransferase (359 aa).

H126 is a binding site for bergaptol. The S-adenosyl-L-homocysteine site is built by S179, G203, D226, D246, and K260. Residue H264 participates in bergaptol binding. H264 (proton acceptor) is an active-site residue.

Belongs to the class I-like SAM-binding methyltransferase superfamily. Cation-independent O-methyltransferase family. COMT subfamily. As to quaternary structure, homodimer. In terms of tissue distribution, mostly expressed in roots and, to a lower extent, in stems and leaves.

It localises to the cytoplasm. The enzyme catalyses bergaptol + S-adenosyl-L-methionine = bergapten + S-adenosyl-L-homocysteine. It participates in aromatic compound metabolism. The protein operates within secondary metabolite biosynthesis. O-methyltransferase involved in the biosynthesis of furocoumarins natural products such as bergapten, a photosensitizer used for medical purpose such as treating psoriasis and vitiligo or facilitating resistance to microbial infection and other stresses. Catalyzes specifically the methylation of bergaptol. Not active on xanthotol, isoscopoletin, scopoletin and esculetin. In Kitagawia praeruptora (Peucedanum praeruptorum), this protein is Bergaptol O-methyltransferase.